The sequence spans 196 residues: dTTP/UTP pyrophosphatase (196 aa).

The Proton acceptor role is filled by D75.

This sequence belongs to the Maf family. YhdE subfamily. A divalent metal cation is required as a cofactor.

The protein localises to the cytoplasm. It carries out the reaction dTTP + H2O = dTMP + diphosphate + H(+). The catalysed reaction is UTP + H2O = UMP + diphosphate + H(+). Functionally, nucleoside triphosphate pyrophosphatase that hydrolyzes dTTP and UTP. May have a dual role in cell division arrest and in preventing the incorporation of modified nucleotides into cellular nucleic acids. This Wolbachia pipientis subsp. Culex pipiens (strain wPip) protein is dTTP/UTP pyrophosphatase.